Consider the following 467-residue polypeptide: Glutamate--tRNA ligase (467 aa).

The 'HIGH' region signature appears at proline 9–serine 19. Positions lysine 237–arginine 241 match the 'KMSKS' region motif. Lysine 240 serves as a coordination point for ATP.

This sequence belongs to the class-I aminoacyl-tRNA synthetase family. Glutamate--tRNA ligase type 1 subfamily. Monomer.

The protein localises to the cytoplasm. The catalysed reaction is tRNA(Glu) + L-glutamate + ATP = L-glutamyl-tRNA(Glu) + AMP + diphosphate. Functionally, catalyzes the attachment of glutamate to tRNA(Glu) in a two-step reaction: glutamate is first activated by ATP to form Glu-AMP and then transferred to the acceptor end of tRNA(Glu). This is Glutamate--tRNA ligase from Buchnera aphidicola subsp. Acyrthosiphon pisum (strain APS) (Acyrthosiphon pisum symbiotic bacterium).